A 231-amino-acid polypeptide reads, in one-letter code: Urease subunit gamma/beta (231 aa).

The interval 1-101 is urease gamma; that stretch reads MLLTPTELER…LVTVHQPIRP (101 aa). Residues 102-231 are urease beta; the sequence is GQLPLAVMPT…RARAQFFKGA (130 aa).

This sequence in the N-terminal section; belongs to the urease gamma subunit family. In the C-terminal section; belongs to the urease beta subunit family. In terms of assembly, heterohexamer of 3 UreC (alpha) and 3 UreAB (gamma/beta) subunits.

The protein localises to the cytoplasm. It carries out the reaction urea + 2 H2O + H(+) = hydrogencarbonate + 2 NH4(+). It functions in the pathway nitrogen metabolism; urea degradation; CO(2) and NH(3) from urea (urease route): step 1/1. The protein is Urease subunit gamma/beta of Pseudomonas syringae pv. syringae (strain B728a).